We begin with the raw amino-acid sequence, 201 residues long: Small ribosomal subunit protein uS4c (201 aa).

In terms of domain architecture, S4 RNA-binding spans 89–150; that stretch reads MRLDNIVFRL…RQKSQAIITK (62 aa).

Belongs to the universal ribosomal protein uS4 family. In terms of assembly, part of the 30S ribosomal subunit. Contacts protein S5. The interaction surface between S4 and S5 is involved in control of translational fidelity.

It is found in the plastid. It localises to the chloroplast. In terms of biological role, one of the primary rRNA binding proteins, it binds directly to 16S rRNA where it nucleates assembly of the body of the 30S subunit. With S5 and S12 plays an important role in translational accuracy. This Physcomitrium patens (Spreading-leaved earth moss) protein is Small ribosomal subunit protein uS4c (rps4).